Reading from the N-terminus, the 465-residue chain is ATP synthase subunit beta (465 aa).

An ATP-binding site is contributed by 152 to 159 (GGAGVGKT).

This sequence belongs to the ATPase alpha/beta chains family. In terms of assembly, F-type ATPases have 2 components, CF(1) - the catalytic core - and CF(0) - the membrane proton channel. CF(1) has five subunits: alpha(3), beta(3), gamma(1), delta(1), epsilon(1). CF(0) has three main subunits: a(1), b(2) and c(9-12). The alpha and beta chains form an alternating ring which encloses part of the gamma chain. CF(1) is attached to CF(0) by a central stalk formed by the gamma and epsilon chains, while a peripheral stalk is formed by the delta and b chains.

The protein resides in the cell inner membrane. The catalysed reaction is ATP + H2O + 4 H(+)(in) = ADP + phosphate + 5 H(+)(out). In terms of biological role, produces ATP from ADP in the presence of a proton gradient across the membrane. The catalytic sites are hosted primarily by the beta subunits. The polypeptide is ATP synthase subunit beta (Campylobacter jejuni subsp. jejuni serotype O:6 (strain 81116 / NCTC 11828)).